A 48-amino-acid polypeptide reads, in one-letter code: Large ribosomal subunit protein bL33 (48 aa).

It belongs to the bacterial ribosomal protein bL33 family.

This Streptococcus mutans serotype c (strain ATCC 700610 / UA159) protein is Large ribosomal subunit protein bL33.